The following is a 147-amino-acid chain: Mid1-interacting protein 1-B (147 aa).

The protein belongs to the SPOT14 family.

Its subcellular location is the nucleus. It is found in the cytoplasm. The protein resides in the cytoskeleton. In terms of biological role, involved in stabilization of microtubules. May play a role in the regulation of lipogenesis. The sequence is that of Mid1-interacting protein 1-B from Danio rerio (Zebrafish).